The primary structure comprises 589 residues: Zinc finger protein 703 (589 aa).

Residues 102-315 (SQIGKPDPPP…GTGHIAPVSP (214 aa)) are disordered. Positions 113 to 122 (SKLGSLSSSS) are enriched in low complexity. Residues 137-148 (SGEHQNLDDKSS) are compositionally biased toward basic and acidic residues. A compositionally biased stretch (polar residues) spans 179–188 (NGSSSSVTCT). Over residues 196–206 (SPRASSPQQTS) the composition is skewed to low complexity. Over residues 214-230 (QSQSPLSQKTAHLQTTH) the composition is skewed to polar residues. Residues 237–250 (GSDPGNDSSSSGSD) are compositionally biased toward low complexity. Basic and acidic residues predominate over residues 251–262 (RNGKKDSDHNKS). Over residues 272–299 (SSHARASVNSSSASSSSSPQPDSKTDSQ) the composition is skewed to low complexity. The required for interaction with Groucho and hdac2 plays an important role in repression of transcription stretch occupies residues 408-460 (VHDPSSALKSGFPLMYPTHHLHSLHPSSLSSSATSSLSHPLYTYGFMLPNETL). A C2H2-type zinc finger spans residues 462–490 (HACNWVSVGGPCDKRFATSEELLAHLRTH). Residues 498–589 (GKLLSGYPSS…LGSASALGYQ (92 aa)) form a required for self-association and nuclear localization region.

This sequence belongs to the Elbow/Noc family. In terms of assembly, self-associates. Interacts with nlz2. May interact with Groucho corepressor proteins.

It localises to the nucleus. Its subcellular location is the cytoplasm. Its function is as follows. Transcriptional corepressor which does not bind directly to DNA and may regulate transcription through recruitment of histone deacetylases to gene promoters. Required for segmental gene expression during hindbrain development. May regulate cell adhesion, migration and proliferation. In Danio rerio (Zebrafish), this protein is Zinc finger protein 703 (znf703).